Reading from the N-terminus, the 309-residue chain is UDP-N-acetylenolpyruvoylglucosamine reductase (309 aa).

One can recognise an FAD-binding PCMH-type domain in the interval Leu-40–Gly-204. Residue Arg-182 is part of the active site. The active-site Proton donor is Ser-233. Glu-304 is a catalytic residue.

This sequence belongs to the MurB family. Requires FAD as cofactor.

Its subcellular location is the cytoplasm. The enzyme catalyses UDP-N-acetyl-alpha-D-muramate + NADP(+) = UDP-N-acetyl-3-O-(1-carboxyvinyl)-alpha-D-glucosamine + NADPH + H(+). Its pathway is cell wall biogenesis; peptidoglycan biosynthesis. Functionally, cell wall formation. The chain is UDP-N-acetylenolpyruvoylglucosamine reductase from Fervidobacterium nodosum (strain ATCC 35602 / DSM 5306 / Rt17-B1).